The sequence spans 669 residues: DNA ligase (669 aa).

Residues 35–39 (DSEYD), 84–85 (SL), and E114 contribute to the NAD(+) site. Catalysis depends on K116, which acts as the N6-AMP-lysine intermediate. The NAD(+) site is built by R137, E171, K287, and K311. Residues C405, C408, C423, and C428 each coordinate Zn(2+). The BRCT domain maps to 591–669 (DSDSYFAGKT…EAQLLGELKK (79 aa)).

The protein belongs to the NAD-dependent DNA ligase family. LigA subfamily. Requires Mg(2+) as cofactor. It depends on Mn(2+) as a cofactor.

The enzyme catalyses NAD(+) + (deoxyribonucleotide)n-3'-hydroxyl + 5'-phospho-(deoxyribonucleotide)m = (deoxyribonucleotide)n+m + AMP + beta-nicotinamide D-nucleotide.. Its function is as follows. DNA ligase that catalyzes the formation of phosphodiester linkages between 5'-phosphoryl and 3'-hydroxyl groups in double-stranded DNA using NAD as a coenzyme and as the energy source for the reaction. It is essential for DNA replication and repair of damaged DNA. This Bacillus velezensis (strain DSM 23117 / BGSC 10A6 / LMG 26770 / FZB42) (Bacillus amyloliquefaciens subsp. plantarum) protein is DNA ligase.